The chain runs to 306 residues: Curved DNA-binding protein (306 aa).

A J domain is found at 5-69 (DYYAIMGVKP…QRRAEYDQMW (65 aa)).

The protein localises to the cytoplasm. The protein resides in the nucleoid. Functionally, DNA-binding protein that preferentially recognizes a curved DNA sequence. It is probably a functional analog of DnaJ; displays overlapping activities with DnaJ, but functions under different conditions, probably acting as a molecular chaperone in an adaptive response to environmental stresses other than heat shock. Lacks autonomous chaperone activity; binds native substrates and targets them for recognition by DnaK. Its activity is inhibited by the binding of CbpM. This chain is Curved DNA-binding protein, found in Shigella dysenteriae serotype 1 (strain Sd197).